The sequence spans 163 residues: MKPSSGLRGLLVLFSLTWTCAGDWSAVKVRCSYFWFYAKIKPTLFHNLYMNPDEAFLGNDCPVTYVSPDAHYEFFYYSNKCGIITKTFQETLLLQTKIKYMSSNSGDTAEMPVSCVVTQQACMYHLSNETESGDDETSSEDMEVSYIMQSQNDLNTTFSLCAK.

An N-terminal signal peptide occupies residues Met1 to Ala21.

It belongs to the PLAC1 family. Oocyte-specific.

The protein resides in the secreted. May be involved in cell differentiation. This Bos taurus (Bovine) protein is Oocyte-secreted protein 1 (OOSP1).